Reading from the N-terminus, the 522-residue chain is tRNA-2-methylthio-N(6)-dimethylallyladenosine synthase (522 aa).

One can recognise an MTTase N-terminal domain in the interval 24–140; sequence RTYEVKTYGC…LPTLLQRAEH (117 aa). Positions 33, 69, 103, 177, 181, and 184 each coordinate [4Fe-4S] cluster. Residues 163–399 form the Radical SAM core domain; that stretch reads RESAYAGWVS…MVVQEQVCEE (237 aa). The region spanning 402–473 is the TRAM domain; sequence QKLIGTTVEL…PFFLIADSGV (72 aa).

It belongs to the methylthiotransferase family. MiaB subfamily. As to quaternary structure, monomer. The cofactor is [4Fe-4S] cluster.

It is found in the cytoplasm. It catalyses the reaction N(6)-dimethylallyladenosine(37) in tRNA + (sulfur carrier)-SH + AH2 + 2 S-adenosyl-L-methionine = 2-methylsulfanyl-N(6)-dimethylallyladenosine(37) in tRNA + (sulfur carrier)-H + 5'-deoxyadenosine + L-methionine + A + S-adenosyl-L-homocysteine + 2 H(+). Functionally, catalyzes the methylthiolation of N6-(dimethylallyl)adenosine (i(6)A), leading to the formation of 2-methylthio-N6-(dimethylallyl)adenosine (ms(2)i(6)A) at position 37 in tRNAs that read codons beginning with uridine. The sequence is that of tRNA-2-methylthio-N(6)-dimethylallyladenosine synthase from Corynebacterium glutamicum (strain ATCC 13032 / DSM 20300 / JCM 1318 / BCRC 11384 / CCUG 27702 / LMG 3730 / NBRC 12168 / NCIMB 10025 / NRRL B-2784 / 534).